The primary structure comprises 447 residues: Cobyrinate a,c-diamide synthase (447 aa).

Positions 247–435 (RIGVAIDEAF…IHIHAASCPQ (189 aa)) constitute a GATase cobBQ-type domain. Cys-329 acts as the Nucleophile in catalysis.

Belongs to the CobB/CbiA family. Requires Mg(2+) as cofactor.

The enzyme catalyses cob(II)yrinate + 2 L-glutamine + 2 ATP + 2 H2O = cob(II)yrinate a,c diamide + 2 L-glutamate + 2 ADP + 2 phosphate + 2 H(+). It carries out the reaction Ni-sirohydrochlorin + 2 L-glutamine + 2 ATP + 2 H2O = Ni-sirohydrochlorin a,c-diamide + 2 L-glutamate + 2 ADP + 2 phosphate + 2 H(+). The protein operates within cofactor biosynthesis; adenosylcobalamin biosynthesis; cob(II)yrinate a,c-diamide from sirohydrochlorin (anaerobic route): step 10/10. Its function is as follows. Catalyzes the ATP-dependent amidation of the two carboxylate groups at positions a and c of cobyrinate, using either L-glutamine or ammonia as the nitrogen source. Involved in the biosynthesis of the unique nickel-containing tetrapyrrole coenzyme F430, the prosthetic group of methyl-coenzyme M reductase (MCR), which plays a key role in methanogenesis and anaerobic methane oxidation. Catalyzes the ATP-dependent amidation of the two carboxylate groups at positions a and c of Ni-sirohydrochlorin, using L-glutamine or ammonia as the nitrogen source. This is Cobyrinate a,c-diamide synthase from Methanothermobacter thermautotrophicus (strain ATCC 29096 / DSM 1053 / JCM 10044 / NBRC 100330 / Delta H) (Methanobacterium thermoautotrophicum).